The chain runs to 291 residues: uncharacterized protein (291 aa).

In terms of biological role, essential for virus function. This is an uncharacterized protein from Sulfolobus spindle-shape virus 1 (SSV1).